Consider the following 861-residue polypeptide: E3 ubiquitin-protein ligase HECTD3 (861 aa).

Position 2 is an N-acetylalanine (alanine 2). A Phosphoserine modification is found at serine 12. Residues aspartate 219–glutamate 397 form the DOC domain. Residues tyrosine 512–serine 857 enclose the HECT domain. Cysteine 823 (glycyl thioester intermediate) is an active-site residue.

In terms of assembly, interacts with TRIOBP. Interacts with STX8.

The protein resides in the cytoplasm. It localises to the perinuclear region. The enzyme catalyses S-ubiquitinyl-[E2 ubiquitin-conjugating enzyme]-L-cysteine + [acceptor protein]-L-lysine = [E2 ubiquitin-conjugating enzyme]-L-cysteine + N(6)-ubiquitinyl-[acceptor protein]-L-lysine.. It functions in the pathway protein modification; protein ubiquitination. E3 ubiquitin ligases accepts ubiquitin from an E2 ubiquitin-conjugating enzyme in the form of a thioester and then directly transfers the ubiquitin to targeted substrates. Mediates ubiquitination of TRIOBP and its subsequent proteasomal degradation, thus facilitating cell cycle progression by regulating the turn-over of TRIOBP. Mediates also ubiquitination of STX8. This is E3 ubiquitin-protein ligase HECTD3 (HECTD3) from Homo sapiens (Human).